The chain runs to 338 residues: Putative pectinesterase 63 (338 aa).

Positions 1–24 are cleaved as a signal peptide; the sequence is MGYNYVSLIVTILLVVITSPVVFG. 2 residues coordinate substrate: Thr116 and Gln151. The Proton donor role is filled by Asp174. The Nucleophile role is filled by Asp195. Substrate is bound at residue Arg252.

Belongs to the pectinesterase family.

It localises to the secreted. The protein localises to the cell wall. The catalysed reaction is [(1-&gt;4)-alpha-D-galacturonosyl methyl ester](n) + n H2O = [(1-&gt;4)-alpha-D-galacturonosyl](n) + n methanol + n H(+). It participates in glycan metabolism; pectin degradation; 2-dehydro-3-deoxy-D-gluconate from pectin: step 1/5. Its function is as follows. Acts in the modification of cell walls via demethylesterification of cell wall pectin. This chain is Putative pectinesterase 63 (PME63), found in Arabidopsis thaliana (Mouse-ear cress).